The chain runs to 163 residues: Acetolactate synthase isozyme 3 small subunit (163 aa).

The ACT domain occupies 4-78 (ILSVLLENES…DVLRVSELGQ (75 aa)).

Belongs to the acetolactate synthase small subunit family. As to quaternary structure, dimer of large and small chains.

The catalysed reaction is 2 pyruvate + H(+) = (2S)-2-acetolactate + CO2. It participates in amino-acid biosynthesis; L-isoleucine biosynthesis; L-isoleucine from 2-oxobutanoate: step 1/4. The protein operates within amino-acid biosynthesis; L-valine biosynthesis; L-valine from pyruvate: step 1/4. With respect to regulation, sensitive to valine inhibition. In Escherichia coli (strain K12), this protein is Acetolactate synthase isozyme 3 small subunit (ilvH).